Reading from the N-terminus, the 267-residue chain is N-acetylgalactosamine permease IIC component 1 (267 aa).

The Periplasmic portion of the chain corresponds to 1 to 10; it reads MHEITLLQGL. In terms of domain architecture, PTS EIIC type-4 spans 1 to 237; it reads MHEITLLQGL…VAVLGAGFAV (237 aa). A helical membrane pass occupies residues 11 to 31; the sequence is SLAALVFVLGIDFWLEALFLF. Residues 32–33 are Cytoplasmic-facing; it reads RP. A helical membrane pass occupies residues 34–54; the sequence is IIVCTLTGAILGDIQTGLITG. Over 55 to 66 the chain is Periplasmic; it reads GLTELAFAGLTP. A helical transmembrane segment spans residues 67 to 87; the sequence is AGGVQPPNPIMAGLMTTVIAW. The Cytoplasmic portion of the chain corresponds to 88 to 94; sequence STGVDAK. Residues 95 to 115 form a helical membrane-spanning segment; it reads TAIGLGLPFSLLMQYVILFFY. At 116 to 141 the chain is on the periplasmic side; the sequence is SAFSLFMTKADKCAKEADTAAFSRLN. Residues 142–162 form a helical membrane-spanning segment; it reads WTTMLIVASAYAVIAFLCTYL. Residues 163-177 are Cytoplasmic-facing; that stretch reads AQGAMQALVKAMPAW. A helical transmembrane segment spans residues 178 to 198; it reads LTHGFEVAGGILPAVGFGLLL. Topologically, residues 199-209 are periplasmic; that stretch reads RVMFKAQYIPY. Residues 210 to 230 traverse the membrane as a helical segment; that stretch reads LIAGFLFVCYIQVSNLLPVAV. Topologically, residues 231-267 are cytoplasmic; sequence LGAGFAVYEFFNAKSRQQAQPQPVASKNEEEDYSNGI.

It localises to the cell inner membrane. Its function is as follows. The phosphoenolpyruvate-dependent sugar phosphotransferase system (PTS), a major carbohydrate active -transport system, catalyzes the phosphorylation of incoming sugar substrates concomitant with their translocation across the cell membrane. This system is involved in N-acetylgalactosamine transport. This chain is N-acetylgalactosamine permease IIC component 1 (agaC), found in Escherichia coli (strain K12).